We begin with the raw amino-acid sequence, 110 residues long: UPF0060 membrane protein RPA3838 (110 aa).

4 helical membrane passes run 4–24 (LLTFCAAALMEIAGCFAFWAW), 31–51 (PLWLIPGMLALALFAYLLTLA), 59–79 (AYAAYGGIYIASALLWGWAIE), and 85–105 (QWDVIGAAICLVGMSVILFGP).

Belongs to the UPF0060 family.

It localises to the cell inner membrane. The chain is UPF0060 membrane protein RPA3838 from Rhodopseudomonas palustris (strain ATCC BAA-98 / CGA009).